The following is a 726-amino-acid chain: Amino-acid acetyltransferase, mitochondrial (726 aa).

The segment covering 1–18 has biased composition (polar residues); it reads MSSRTLVGLRSTTSTHLQ. Residues 1–44 constitute a mitochondrion transit peptide; that stretch reads MSSRTLVGLRSTTSTHLQRSGVAAAAAVSSSSTSSSGSAPRRCL. The interval 1-64 is disordered; sequence MSSRTLVGLR…SAEFSSSSKS (64 aa). Residues 20–39 show a composition bias toward low complexity; sequence SGVAAAAAVSSSSTSSSGSA. Over residues 45–58 the composition is skewed to polar residues; that stretch reads SSASGRQVQQSAEF. The region spanning 547 to 716 is the N-acetyltransferase domain; that stretch reads DRPRLGLDDP…YEAVCRSIQP (170 aa).

This sequence belongs to the acetyltransferase family.

It is found in the mitochondrion. It catalyses the reaction L-glutamate + acetyl-CoA = N-acetyl-L-glutamate + CoA + H(+). The protein operates within amino-acid biosynthesis; L-arginine biosynthesis; N(2)-acetyl-L-ornithine from L-glutamate: step 1/4. N-acetylglutamate synthase involved in arginine biosynthesis. This is Amino-acid acetyltransferase, mitochondrial (arg2) from Aspergillus niger (strain ATCC MYA-4892 / CBS 513.88 / FGSC A1513).